A 203-amino-acid chain; its full sequence is Dephospho-CoA kinase (203 aa).

Residues 10–203 (IIGITGNIGS…LTGGAKGGRG (194 aa)) enclose the DPCK domain. 18-23 (GSGKST) contributes to the ATP binding site.

The protein belongs to the CoaE family.

It is found in the cytoplasm. It catalyses the reaction 3'-dephospho-CoA + ATP = ADP + CoA + H(+). The protein operates within cofactor biosynthesis; coenzyme A biosynthesis; CoA from (R)-pantothenate: step 5/5. Its function is as follows. Catalyzes the phosphorylation of the 3'-hydroxyl group of dephosphocoenzyme A to form coenzyme A. The chain is Dephospho-CoA kinase from Thermus thermophilus (strain ATCC BAA-163 / DSM 7039 / HB27).